A 741-amino-acid polypeptide reads, in one-letter code: Ribosome-releasing factor 2, mitochondrial (741 aa).

The N-terminal 29 residues, 1 to 29, are a transit peptide targeting the mitochondrion; the sequence is MLKYEFLHGLQKRSHYLRQLSGQFFSRSY. The tr-type G domain maps to 31 to 310; that stretch reads SKIRNIGILA…AVNSYLPAPE (280 aa). Residues 40 to 47, 104 to 108, and 158 to 161 each bind GTP; these read AHIDAGKT, DTPGH, and NKMD.

It belongs to the TRAFAC class translation factor GTPase superfamily. Classic translation factor GTPase family. EF-G/EF-2 subfamily.

The protein resides in the mitochondrion. In terms of biological role, mitochondrial GTPase that mediates the disassembly of ribosomes from messenger RNA at the termination of mitochondrial protein biosynthesis. Not involved in the GTP-dependent ribosomal translocation step during translation elongation. This is Ribosome-releasing factor 2, mitochondrial from Drosophila ananassae (Fruit fly).